A 298-amino-acid polypeptide reads, in one-letter code: (DL)-glycerol-3-phosphatase 1, mitochondrial (298 aa).

Residues 1–46 constitute a mitochondrion transit peptide; that stretch reads MLTTPTRFVALRIPFRSSNKIPISIAPSPKVFPRKPVIRVPASLRF. Asp77 functions as the Nucleophile in the catalytic mechanism. Positions 77, 79, and 242 each coordinate Mg(2+). Asp79 functions as the Proton donor in the catalytic mechanism.

Belongs to the HAD-like hydrolase superfamily. DOG/GPP family. It depends on Mg(2+) as a cofactor. As to expression, ubiquitous with highest expression in siliques. Mainly restricted to the meristem of immature flower and vascular elements of the root, shoot, leave, siliqua and developing embryo (at the protein level).

It is found in the mitochondrion. The enzyme catalyses sn-glycerol 1-phosphate + H2O = glycerol + phosphate. It catalyses the reaction sn-glycerol 3-phosphate + H2O = glycerol + phosphate. It carries out the reaction 5-amino-6-(5-phospho-D-ribitylamino)uracil + H2O = 5-amino-6-(D-ribitylamino)uracil + phosphate. Acts as a glycerol-3-phosphatase with higher stereospecificity for L-glycerol-3-phosphate than DL-glycerol-3-phosphate. Can also dephosphorylate in vitro 5-amino-6-(5-phospho-D-ribitylamino)uracil, also known as ARPP. In Arabidopsis thaliana (Mouse-ear cress), this protein is (DL)-glycerol-3-phosphatase 1, mitochondrial.